The chain runs to 475 residues: Bifunctional purple acid phosphatase 26 (475 aa).

Positions 1–30 (MNHLVIISVFLSSVLLLYRGESGITSSFIR) are cleaved as a signal peptide. Asn-103 carries an N-linked (GlcNAc...) asparagine glycan. Fe cation is bound by residues Asp-162, Asp-189, and Tyr-192. Asp-189 lines the Zn(2+) pocket. Residues Asn-227 and His-312 each contribute to the Zn(2+) site. Asn-227 contacts substrate. The active-site Proton donor is the His-322. His-349 is a binding site for Zn(2+). 349-351 (HVH) is a substrate binding site. His-351 serves as a coordination point for Fe cation. Asn-365 and Asn-422 each carry an N-linked (GlcNAc...) asparagine glycan.

This sequence belongs to the metallophosphoesterase superfamily. Purple acid phosphatase family. As to quaternary structure, homodimer. Fe cation serves as cofactor. It depends on Zn(2+) as a cofactor. Glycosylated. As to expression, expressed in roots, stems, leaves, flowers and siliques.

Its subcellular location is the vacuole. It carries out the reaction a phosphate monoester + H2O = an alcohol + phosphate. The enzyme catalyses 2 a phenolic donor + H2O2 = 2 a phenolic radical donor + 2 H2O. Its activity is regulated as follows. Activated by Mg(2+), Co(2+), Mn(2+) and Ba(2+). Inhibited by Fe(2+), Cu(2+), Zn(2+), NaF, molybdate, arsenate, vanadate and inorganic phosphate. No effect of tartrate, Asp, Gln, glutathione, Asn, ascorbic acid and phosphite. Functionally, metallo-phosphoesterase involved in phosphate metabolism. Acid phosphatase activity with phosphoenolpyruvate, inorganic pyrophosphate, phenyl-phosphate and p-nitrophenyl-phosphate as the most effective substrates. No activity with phytic acid, phosphocholine or bis-p-nitrophenyl-phosphate. Has a peroxidase activity at alkaline pH. This Arabidopsis thaliana (Mouse-ear cress) protein is Bifunctional purple acid phosphatase 26 (PAP26).